Reading from the N-terminus, the 519-residue chain is MAAEREPPPLGDGKPTDFEDLEDGEDLFTSTVSTLESSPSSPEPASLPAEDISANSNGPKPTEVVLDDDREDLFAEATEEVSLDSPEREPILSSEPSPAVTPVTPTTLIAPRIESKSMSAPVIFDRSREEIEEEANGDIFDIEIGVSDPEKVGDGMNAYMAYRVTTKTSLSMFSKSEFSVKRRFSDFLGLHSKLASKYLHVGYIVPPAPEKSIVGMTKVKVGKEDSSSTEFVEKRRAALERYLQRTVKHPTLLQDPDLRQFLESSELPRAVNTQALSGAGILRMVNKAADAVNKMTIKMNESDAWFEEKQQQFENLDQQLRKLHVSVEALVCHRKELSANTAAFAKSAAMLGNSEDHTALSRALSQLAEVEEKIDQLHQEQAFADFYMFSELLSDYIRLIAAVKGVFDHRMKCWQKWEDAQITLLKKREAEAKMMVANKPDKIQQAKNEIREWEAKVQQGERDFEQISKTIRKEVGRFEKERVKDFKTVIIKYLESLVQTQQQLIKYWEAFLPEAKAIA.

Residues 1 to 104 (MAAEREPPPL…EPSPAVTPVT (104 aa)) form a disordered region. 2 stretches are compositionally biased toward low complexity: residues 27–50 (LFTS…LPAE) and 93–104 (SSEPSPAVTPVT). Residue S97 is modified to Phosphoserine. T101 and T104 each carry phosphothreonine. 2 positions are modified to phosphoserine: S117 and S119. A PX domain is found at 140-269 (FDIEIGVSDP…QFLESSELPR (130 aa)). 4 residues coordinate a 1,2-diacyl-sn-glycero-3-phospho-(1D-myo-inositol-3-phosphate): R183, S185, K211, and R235. Position 185 is a phosphoserine (S185). Positions 260–519 (QFLESSELPR…AFLPEAKAIA (260 aa)) are interaction with RhoG. At S277 the chain carries Phosphoserine. Residues 278-295 (GAGILRMVNKAADAVNKM) are membrane-binding amphipathic helix. Positions 299–519 (MNESDAWFEE…AFLPEAKAIA (221 aa)) constitute a BAR domain. K469 is modified (N6-acetyllysine).

The protein belongs to the sorting nexin family. In terms of assembly, predominantly forms heterodimers with BAR domain-containing sorting nexins SNX5, SNX6 and SNX32; can self-associate to form homodimers. The heterodimers are proposed to self-assemble into helical arrays on the membrane to stabilize and expand local membrane curvature underlying endosomal tubule formation. Thought to be a component of the originally described retromer complex (also called SNX-BAR retromer) which is a pentamer containing the heterotrimeric retromer cargo-selective complex (CSC), also described as vacuolar protein sorting subcomplex (VPS), and a heterodimeric membrane-deforming subcomplex formed between SNX1 or SNX2 and SNX5 or SNX6 (also called SNX-BAR subcomplex); the respective CSC and SNX-BAR subcomplexes associate with low affinity. Interacts with SNX5, SNX6, SNX32, VPS26A, VPS29, VPS35, FNBP1, KALRN, RHOG (GDP-bound form).

The protein localises to the early endosome membrane. Its subcellular location is the cell projection. It is found in the lamellipodium. In terms of biological role, involved in several stages of intracellular trafficking. Interacts with membranes containing phosphatidylinositol 3-phosphate (PtdIns(3P)) or phosphatidylinositol 3,5-bisphosphate (PtdIns(3,5)P2). Acts in part as component of the retromer membrane-deforming SNX-BAR subcomplex. The SNX-BAR retromer mediates retrograde transport of cargo proteins from endosomes to the trans-Golgi network (TGN) and is involved in endosome-to-plasma membrane transport for cargo protein recycling. The SNX-BAR subcomplex functions to deform the donor membrane into a tubular profile called endosome-to-TGN transport carrier (ETC). Can sense membrane curvature and has in vitro vesicle-to-membrane remodeling activity. Required for retrograde endosome-to-TGN transport of TGN38. Promotes KALRN- and RHOG-dependent but retromer-independent membrane remodeling such as lamellipodium formation; the function is dependent on GEF activity of KALRN. This is Sorting nexin-2 (SNX2) from Homo sapiens (Human).